A 231-amino-acid chain; its full sequence is 7-cyano-7-deazaguanine synthase (231 aa).

An ATP-binding site is contributed by 11–21 (LSAGLDSTVNA). Cys-197, Cys-205, Cys-208, and Cys-211 together coordinate Zn(2+).

The protein belongs to the QueC family. The cofactor is Zn(2+).

The catalysed reaction is 7-carboxy-7-deazaguanine + NH4(+) + ATP = 7-cyano-7-deazaguanine + ADP + phosphate + H2O + H(+). Its pathway is purine metabolism; 7-cyano-7-deazaguanine biosynthesis. Functionally, catalyzes the ATP-dependent conversion of 7-carboxy-7-deazaguanine (CDG) to 7-cyano-7-deazaguanine (preQ(0)). The sequence is that of 7-cyano-7-deazaguanine synthase from Bdellovibrio bacteriovorus (strain ATCC 15356 / DSM 50701 / NCIMB 9529 / HD100).